Consider the following 209-residue polypeptide: Octanoyltransferase (209 aa).

In terms of domain architecture, BPL/LPL catalytic spans glycine 29 to glutamate 209. Residues arginine 68 to histidine 75, alanine 141 to glycine 143, and glycine 154 to alanine 156 contribute to the substrate site. The active-site Acyl-thioester intermediate is cysteine 172.

It belongs to the LipB family.

It is found in the cytoplasm. It carries out the reaction octanoyl-[ACP] + L-lysyl-[protein] = N(6)-octanoyl-L-lysyl-[protein] + holo-[ACP] + H(+). Its pathway is protein modification; protein lipoylation via endogenous pathway; protein N(6)-(lipoyl)lysine from octanoyl-[acyl-carrier-protein]: step 1/2. Functionally, catalyzes the transfer of endogenously produced octanoic acid from octanoyl-acyl-carrier-protein onto the lipoyl domains of lipoate-dependent enzymes. Lipoyl-ACP can also act as a substrate although octanoyl-ACP is likely to be the physiological substrate. This chain is Octanoyltransferase, found in Neorickettsia sennetsu (strain ATCC VR-367 / Miyayama) (Ehrlichia sennetsu).